Consider the following 338-residue polypeptide: tRNA N6-adenosine threonylcarbamoyltransferase (338 aa).

The Fe cation site is built by His-111 and His-115. Substrate is bound by residues 134-138 (LVSGG), Asp-167, Gly-180, and Asn-272. Residue Asp-300 coordinates Fe cation.

Belongs to the KAE1 / TsaD family. Fe(2+) serves as cofactor.

Its subcellular location is the cytoplasm. The catalysed reaction is L-threonylcarbamoyladenylate + adenosine(37) in tRNA = N(6)-L-threonylcarbamoyladenosine(37) in tRNA + AMP + H(+). Its function is as follows. Required for the formation of a threonylcarbamoyl group on adenosine at position 37 (t(6)A37) in tRNAs that read codons beginning with adenine. Is involved in the transfer of the threonylcarbamoyl moiety of threonylcarbamoyl-AMP (TC-AMP) to the N6 group of A37, together with TsaE and TsaB. TsaD likely plays a direct catalytic role in this reaction. In Shewanella halifaxensis (strain HAW-EB4), this protein is tRNA N6-adenosine threonylcarbamoyltransferase.